The following is a 268-amino-acid chain: Riboflavin transport system permease protein RibX (268 aa).

Helical transmembrane passes span 24 to 44 (ALGL…GVTL), 76 to 96 (LATL…ALIL), 119 to 139 (AIPV…GLTS), 140 to 160 (KVLV…VVAI), 185 to 205 (VEAP…LALA), and 236 to 256 (LIFV…VLAG). The ABC transmembrane type-1 domain maps to 75–255 (TLATLSAALG…LITLTLYVLA (181 aa)).

The protein belongs to the binding-protein-dependent transport system permease family. As to quaternary structure, the complex is likely composed of an ATP-binding protein, a transmembrane protein (RibX) and a solute-binding protein (RibY).

The protein localises to the cell membrane. Functionally, part of an ABC transporter complex that transports riboflavin into the cell. The sequence is that of Riboflavin transport system permease protein RibX from Chloroflexus aurantiacus (strain ATCC 29366 / DSM 635 / J-10-fl).